Consider the following 113-residue polypeptide: U11-theraphotoxin-Hhn1p (113 aa).

The first 21 residues, 1-21, serve as a signal peptide directing secretion; the sequence is MNTVRVTFLLVFVLAVSLGQA. Positions 22–74 are excised as a propeptide; that stretch reads DKDENRMEMQEKTEQGKSYLDFAENLLLQKLEELEAKLLEEDSEESRNSRQKR. A disordered region spans residues 61–83; that stretch reads EEDSEESRNSRQKRCIGEGVPCD. Disulfide bonds link C75–C90, C82–C95, and C89–C110.

Belongs to the neurotoxin 14 (magi-1) family. 01 (HNTX-16) subfamily. As to expression, expressed by the venom gland.

The protein resides in the secreted. Probable ion channel inhibitor. In Cyriopagopus hainanus (Chinese bird spider), this protein is U11-theraphotoxin-Hhn1p.